We begin with the raw amino-acid sequence, 208 residues long: Somatotropin-B (208 aa).

A signal peptide spans 1–25; the sequence is MVPGSCSSFGLLVILSFQNVPDVGG. Position 44 (His-44) interacts with Zn(2+). A disulfide bond links Cys-77 and Cys-181. Glu-190 contacts Zn(2+). A disulfide bond links Cys-198 and Cys-206.

Belongs to the somatotropin/prolactin family.

It localises to the secreted. In terms of biological role, growth hormone plays an important role in growth control. In Xenopus laevis (African clawed frog), this protein is Somatotropin-B (gh-b).